We begin with the raw amino-acid sequence, 1090 residues long: Leucine-rich repeat receptor-like serine/threonine-protein kinase RGI4 (1090 aa).

The signal sequence occupies residues 1–20; the sequence is MPRNPRFCFFLFLLFHSSLF. Topologically, residues 21 to 702 are extracellular; it reads FSIPCFSIDE…IQTRHRSAVK (682 aa). Residues 36-59 form an LRR 1 repeat; it reads LSWKSQLNISGDALSSWKASESNP. N-linked (GlcNAc...) asparagine glycosylation occurs at Asn43. Residues Cys60 and Cys67 are joined by a disulfide bond. 4 LRR repeats span residues 95 to 119, 120 to 143, 145 to 166, and 168 to 191; these read IKSL…LGDL, SELE…IFKL, KLKI…ELGN, and VNLI…IGEL. N-linked (GlcNAc...) asparagine glycosylation is present at Asn107. Short sequence motifs (small peptide recognition) lie at residues 176-177, 198-201, 221-226, and Tyr249; these read FD, RAGG, and TLGLAE. LRR repeat units follow at residues 216 to 240, 242 to 264, 265 to 288, 289 to 312, 314 to 335, 336 to 360, and 362 to 386; these read CESL…IGNL, KVQT…IGNC, TELQ…MGRL, KKLQ…LGTC, ELFL…SFGN, LPNL…LANC, and KLTH…KLTS. Asn263 is a glycosylation site (N-linked (GlcNAc...) asparagine). The CLE45 peptide binding motif lies at 269–273; sequence NLYLY. A Small peptide recognition motif is present at residues 271-273; it reads YLY. 2 short sequence motifs (small peptide recognition) span residues 319 to 322 and 341 to 343; these read DLSE and ELQ. Asn359 carries N-linked (GlcNAc...) asparagine glycosylation. 2 short sequence motifs (small peptide recognition) span residues 389-393 and 415-418; these read MFFAW and DLSY. LRR repeat units follow at residues 408–432, 434–456, 457–480, 481–504, 506–526, 527–550, 551–574, 576–598, 600–622, 623–646, and 647–670; these read CQEL…IFEI, NLTK…IGNC, TNLY…IGNL, KNLN…ISGC, SLEF…GTLP, KSLQ…IGSL, TELT…ISSC, SLQL…LGRI, SLAI…RFSS, LTNL…LADL, and QNLV…LFFR. 2 N-linked (GlcNAc...) asparagine glycosylation sites follow: Asn420 and Asn434. The short motif at 437-441 is the Small peptide recognition element; it reads KLLLL. An N-linked (GlcNAc...) asparagine glycan is attached at Asn455. Residues 461–463 carry the Small peptide recognition motif; sequence RLR. Asn606 is a glycosylation site (N-linked (GlcNAc...) asparagine). Asn653 carries an N-linked (GlcNAc...) asparagine glycan. The helical transmembrane segment at 703 to 723 threads the bilayer; it reads VTMSILVAASVVLVLMAVYTL. Topologically, residues 724–1090 are cytoplasmic; it reads VKAQRITGKQ…CSFAYSDESV (367 aa). A Protein kinase domain is found at 758–1040; that stretch reads LTSANVIGTG…KDIVAMLKEI (283 aa). Residues 764 to 772 and Lys786 contribute to the ATP site; that span reads IGTGSSGVV. Residues Tyr829 and Tyr869 each carry the phosphotyrosine modification. Residue Asp882 is the Proton acceptor of the active site. The residue at position 932 (Tyr932) is a Phosphotyrosine. One copy of the LRR 24 repeat lies at 1037-1060; that stretch reads LKEIRQFDMDRSESDMIKGGKCEK. Positions 1054 to 1079 are disordered; it reads KGGKCEKWQPQPLPPEKIVSTPRGSS.

Belongs to the protein kinase superfamily. Ser/Thr protein kinase family. Self-interacts. Interacts with RGF1; this interaction triggers its phosphorylation and ubiquitination and the formation of heterodimers with SERK1. Autophosphorylated. Post-translationally, phosphorylated and ubiquitinated upon interaction with RGF1, thus leading to activation a subsequent degradation. In terms of tissue distribution, expressed in floers, pollen grains and stipules. Present in roots.

It is found in the cell membrane. The enzyme catalyses L-seryl-[protein] + ATP = O-phospho-L-seryl-[protein] + ADP + H(+). It catalyses the reaction L-threonyl-[protein] + ATP = O-phospho-L-threonyl-[protein] + ADP + H(+). Functionally, receptor with a serine/threonine-protein kinase activity. Together with SKM1, LRR-rich receptor-like kinase (LRR-RLK) required for male fertility by the perception of CLE43 and CLE45 peptides and the transduction of their promoting action in pollen tubes, especially under relatively high temperature (at 30 degrees Celsius), thus conferring tolerance against high temperature probably through the maintenance of mitochondrial activity. Seems to not be involved in the perception of CLE45 peptide in roots. Together with RGI1, RGI2, RGI3, RGI4 and RGI5, acts as receptor of RGF1, a peptide hormone that maintains the postembryonic root stem cell niche by regulating the expression levels and patterns of the transcription factor PLETHORA (PLT). Links RGF1 signal with its downstream components. This Arabidopsis thaliana (Mouse-ear cress) protein is Leucine-rich repeat receptor-like serine/threonine-protein kinase RGI4.